The chain runs to 122 residues: Small ribosomal subunit protein uS13 (122 aa).

A compositionally biased stretch (basic residues) spans 95 to 116 (GLPVRGQKTKTNARTRKGRRKT). Residues 95–122 (GLPVRGQKTKTNARTRKGRRKTVGAATK) form a disordered region.

Belongs to the universal ribosomal protein uS13 family. As to quaternary structure, part of the 30S ribosomal subunit. Forms a loose heterodimer with protein S19. Forms two bridges to the 50S subunit in the 70S ribosome.

Located at the top of the head of the 30S subunit, it contacts several helices of the 16S rRNA. In the 70S ribosome it contacts the 23S rRNA (bridge B1a) and protein L5 of the 50S subunit (bridge B1b), connecting the 2 subunits; these bridges are implicated in subunit movement. Contacts the tRNAs in the A and P-sites. The sequence is that of Small ribosomal subunit protein uS13 from Campylobacter curvus (strain 525.92).